The primary structure comprises 451 residues: Heme sensor protein HssS (451 aa).

2 helical membrane passes run 9–29 (IAIY…LFTN) and 164–184 (IFLA…VIAS). The region spanning 186–238 (YSIIKPVTALKNATTRIMKGDFSTPIKQTRHDEIGTLQSRFNTMRQNLGQVDQ) is the HAMP domain. A Histidine kinase domain is found at 246–451 (NVSHEVKTPL…KTQFIVKLFI (206 aa)). His249 is modified (phosphohistidine; by autocatalysis).

Autophosphorylated.

It is found in the cell membrane. The catalysed reaction is ATP + protein L-histidine = ADP + protein N-phospho-L-histidine.. Its function is as follows. Member of the two-component regulatory system HssS/HssR involved in intracellular heme homeostasis and tempering of staphylococcal virulence. HssS functions as a heme sensor histidine kinase which is autophosphorylated at a histidine residue and transfers its phosphate group to an aspartate residue of HssR. HssR/HssS activates the expression of HrtAB, an efflux pump, in response to extracellular heme, hemin, hemoglobin or blood. This is Heme sensor protein HssS (hssS) from Staphylococcus epidermidis (strain ATCC 35984 / DSM 28319 / BCRC 17069 / CCUG 31568 / BM 3577 / RP62A).